We begin with the raw amino-acid sequence, 304 residues long: D-alanine--D-alanine ligase (304 aa).

Positions 103-299 (KLIWQALGLP…FADLCIEILK (197 aa)) constitute an ATP-grasp domain. 129-184 (EEKLGLPMFVKPAAEGSSVGVVKVKGKGRLKSVYEELKHFQGEIIAERFIGGGEYS) serves as a coordination point for ATP. Mg(2+)-binding residues include Asp-253, Glu-266, and Asn-268.

The protein belongs to the D-alanine--D-alanine ligase family. Mg(2+) is required as a cofactor. The cofactor is Mn(2+).

The protein localises to the cytoplasm. It carries out the reaction 2 D-alanine + ATP = D-alanyl-D-alanine + ADP + phosphate + H(+). Its pathway is cell wall biogenesis; peptidoglycan biosynthesis. Cell wall formation. The protein is D-alanine--D-alanine ligase of Neisseria meningitidis serogroup A / serotype 4A (strain DSM 15465 / Z2491).